We begin with the raw amino-acid sequence, 188 residues long: Pyridoxal 5'-phosphate synthase subunit PdxT (188 aa).

Residue glycine 46–serine 48 coordinates L-glutamine. Cysteine 78 functions as the Nucleophile in the catalytic mechanism. L-glutamine contacts are provided by residues arginine 105 and isoleucine 133–arginine 134. Active-site charge relay system residues include histidine 169 and glutamate 171.

The protein belongs to the glutaminase PdxT/SNO family. In terms of assembly, in the presence of PdxS, forms a dodecamer of heterodimers. Only shows activity in the heterodimer.

It carries out the reaction aldehydo-D-ribose 5-phosphate + D-glyceraldehyde 3-phosphate + L-glutamine = pyridoxal 5'-phosphate + L-glutamate + phosphate + 3 H2O + H(+). The enzyme catalyses L-glutamine + H2O = L-glutamate + NH4(+). The protein operates within cofactor biosynthesis; pyridoxal 5'-phosphate biosynthesis. In terms of biological role, catalyzes the hydrolysis of glutamine to glutamate and ammonia as part of the biosynthesis of pyridoxal 5'-phosphate. The resulting ammonia molecule is channeled to the active site of PdxS. The polypeptide is Pyridoxal 5'-phosphate synthase subunit PdxT (Thermosipho africanus (strain TCF52B)).